The following is a 389-amino-acid chain: Aspartyl protease UND (389 aa).

The first 19 residues, 1–19 (MKTTMNFVFLFFLPLLINA), serve as a signal peptide directing secretion. The region spanning 58–383 (FMAEIHFGSP…DLSAKTAYIN (326 aa)) is the Peptidase A1 domain. Asp-76 is an active-site residue. A disulfide bond links Cys-86 and Cys-92. Residue Asn-238 is glycosylated (N-linked (GlcNAc...) asparagine). The active site involves Asp-268. Cysteines 304 and 346 form a disulfide.

The protein belongs to the peptidase A1 family.

Its function is as follows. Probable aspartic protease activated by the transcription factor MYB80. May participate in the regulation of the timing of tapetal programmed cell death (PCD) which is critical for pollen development. This chain is Aspartyl protease UND, found in Arabidopsis thaliana (Mouse-ear cress).